A 383-amino-acid polypeptide reads, in one-letter code: Alanine racemase (383 aa).

K50 functions as the Proton acceptor; specific for D-alanine in the catalytic mechanism. Residue K50 is modified to N6-(pyridoxal phosphate)lysine. Residue R151 coordinates substrate. Y279 (proton acceptor; specific for L-alanine) is an active-site residue. Residue M327 participates in substrate binding.

Belongs to the alanine racemase family. Pyridoxal 5'-phosphate is required as a cofactor.

The catalysed reaction is L-alanine = D-alanine. The protein operates within amino-acid biosynthesis; D-alanine biosynthesis; D-alanine from L-alanine: step 1/1. Functionally, catalyzes the interconversion of L-alanine and D-alanine. May also act on other amino acids. This chain is Alanine racemase (alr), found in Chlorobaculum tepidum (strain ATCC 49652 / DSM 12025 / NBRC 103806 / TLS) (Chlorobium tepidum).